The following is a 182-amino-acid chain: Small heat shock protein hspG1 (182 aa).

The sHSP domain maps to 43-182 (IKRIDIIPSM…SNSSFKININ (140 aa)).

It belongs to the small heat shock protein (HSP20) family.

In Dictyostelium discoideum (Social amoeba), this protein is Small heat shock protein hspG1 (hspG1).